The primary structure comprises 394 residues: MASVTVEQIRKAQRAEGPATILAIGTAVPANCFNQADFPDYYFRVTKSEHMTDLKKKFQRMCEKSTIKKRYLHLTEEHLKQNPHLCEYNAPSLNTRQDMLVVEVPKLGKEAAINAIKEWGQPKSKITHLIFCTGSSIDMPGADYQCAKLLGLRPSVKRVMLYQLGCYAGGKVLRIAKDIAENNKGARVLIVCSEITACIFRGPSEKHLDCLVGQSLFGDGASSVIVGADPDASVGERPIFELVSAAQTILPNSDGAIAGHVTEAGLTFHLLRDVPGLISQNIEKSLIEAFTPIGINDWNNIFWIAHPGGPAILDEIEAKLELKKEKMKASREMLSEYGNMSCASVFFIVDEMRKQSSKEGKSTTGDGLEWGALFGFGPGLTVETVVLHSVPTNV.

Residue Cys-166 is part of the active site.

Belongs to the thiolase-like superfamily. Chalcone/stilbene synthases family. In terms of assembly, homodimer. Expressed in lupulin gland. Present at low levels in leaves but accumulates in cones.

It carries out the reaction 3-methylbutanoyl-CoA + 3 malonyl-CoA + 3 H(+) = phlorisovalerophenone + 3 CO2 + 4 CoA. The catalysed reaction is (E)-4-coumaroyl-CoA + 3 malonyl-CoA + 3 H(+) = 2',4,4',6'-tetrahydroxychalcone + 3 CO2 + 4 CoA. It catalyses the reaction 2-methylpropanoyl-CoA + 3 malonyl-CoA + 3 H(+) = phlorisobutanophenone + 3 CO2 + 4 CoA. Its pathway is secondary metabolite biosynthesis. Functionally, involved in the biosynthesis of prenylated phenolics natural products which contribute to the bitter taste of beer and display broad biological activities. Polyketide synthase that can use 3-methylbutanoyl-CoA (isovaleryl-CoA) and 2-methylpropanoyl-CoA (isobutyryl-CoA) as substrates to produce phlorisovalerophenone (PIVP) and phlorisobutyrophenone (2-methyl-1-(2,4,6-trihydroxyphenyl)propan-1-one), respectively, intermediates in the biosynthesis of the bitter acids (alpha and beta) acids. Can also produce naringenin-chalcone (2',4,4',6'-tetrahydroxychalcone) from 4-coumaroyl-CoA with a lower efficiency. This is Phloroisovalerophenone synthase from Humulus lupulus (European hop).